Here is a 314-residue protein sequence, read N- to C-terminus: Cytochrome c biogenesis protein CcsA (314 aa).

8 helical membrane-spanning segments follow: residues 15-35 (VSFI…ISLI), 48-68 (LITI…WIIS), 73-93 (ISNL…GQLL), 102-122 (IIPA…CFVL), 148-168 (VMLS…VLFI), 216-236 (SILV…IWAN), 250-267 (TWAF…HMRI), and 277-297 (ALLA…VNFL).

The protein belongs to the CcmF/CycK/Ccl1/NrfE/CcsA family. In terms of assembly, may interact with ccs1.

It is found in the cellular thylakoid membrane. Its function is as follows. Required during biogenesis of c-type cytochromes (cytochrome c6 and cytochrome f) at the step of heme attachment. The protein is Cytochrome c biogenesis protein CcsA of Prochlorococcus marinus subsp. pastoris (strain CCMP1986 / NIES-2087 / MED4).